The primary structure comprises 142 residues: Hemoglobin subunit alpha-A (142 aa).

In terms of domain architecture, Globin spans 2–142 (VLSAADKTNV…VGAVLTAKYR (141 aa)). Residue His-59 participates in O2 binding. Heme b is bound at residue His-88.

Belongs to the globin family. As to quaternary structure, heterotetramer of two alpha chains and two beta chains. Red blood cells.

In terms of biological role, involved in oxygen transport from the lung to the various peripheral tissues. The sequence is that of Hemoglobin subunit alpha-A (HBAA) from Cairina moschata (Muscovy duck).